Here is a 2606-residue protein sequence, read N- to C-terminus: Large tegument protein deneddylase (2606 aa).

The interval 1 to 235 (MAFQAQTDTG…LKRSGAYVNL (235 aa)) is deubiquitination activity. The Peptidase C76 domain maps to 14–225 (LATASSHQGD…LLANYGIASA (212 aa)). Residues Cys-34, Asp-163, and His-165 contribute to the active site. 5 disordered regions span residues 318–349 (IAIS…PNEA), 390–411 (DTDS…KSGQ), 1020–1135 (KKGL…ESSE), 2253–2316 (PEIH…PTPL), and 2434–2458 (PPHD…ERKY). Polar residues predominate over residues 1038 to 1050 (TPVTDSKLIQDSQ). Basic and acidic residues predominate over residues 1051-1061 (QNDRHQKEKPL). The segment covering 1085 to 1097 (KPQNLSLPVSTNK) has biased composition (polar residues). Residues 1105-1132 (ESSPIESTSPSHSPVSSMESQNGSFSLE) show a composition bias toward low complexity. Residues 2304–2316 (PNPPRPTTFPTPL) are compositionally biased toward pro residues.

It belongs to the herpesviridae large tegument protein family. Interacts with host CUL1 and CUL4A; these interactions inhibit the E3 ligase activity of cullins. Interacts with inner tegument protein. Interacts with capsid vertex specific component CVC2. Interacts with the major capsid protein/MCP.

Its subcellular location is the virion tegument. The protein resides in the host cytoplasm. It is found in the host nucleus. The enzyme catalyses Thiol-dependent hydrolysis of ester, thioester, amide, peptide and isopeptide bonds formed by the C-terminal Gly of ubiquitin (a 76-residue protein attached to proteins as an intracellular targeting signal).. Large tegument protein that plays multiple roles in the viral cycle. During viral entry, remains associated with the capsid while most of the tegument is detached and participates in the capsid transport toward the host nucleus. Plays a role in the routing of the capsid at the nuclear pore complex and subsequent uncoating. Within the host nucleus, acts as a deneddylase and promotes the degradation of nuclear CRLs (cullin-RING ubiquitin ligases) and thereby stabilizes nuclear CRL substrates, while cytoplasmic CRLs remain unaffected. These modifications prevent host cell cycle S-phase progression and create a favorable environment allowing efficient viral genome replication. Participates later in the secondary envelopment of capsids. Indeed, plays a linker role for the association of the outer viral tegument to the capsids together with the inner tegument protein. The polypeptide is Large tegument protein deneddylase (64) (Connochaetes taurinus (Blue wildebeest)).